A 338-amino-acid polypeptide reads, in one-letter code: Cytochrome P450 monooxygenase easK (338 aa).

A signal peptide spans 1 to 16 (MLLLTFTLPVVTLLLA). 2 N-linked (GlcNAc...) asparagine glycosylation sites follow: Asn-240 and Asn-327.

This sequence belongs to the cytochrome P450 family. Heme serves as cofactor.

The protein operates within alkaloid biosynthesis; ergot alkaloid biosynthesis. Its function is as follows. Cytochrome P450 monooxygenase; part of the gene cluster that mediates the biosynthesis of fumiclavanine C, a fungal ergot alkaloid. DmaW catalyzes the first step of ergot alkaloid biosynthesis by condensing dimethylallyl diphosphate (DMAP) and tryptophan to form 4-dimethylallyl-L-tryptophan. The second step is catalyzed by the methyltransferase easF that methylates 4-dimethylallyl-L-tryptophan in the presence of S-adenosyl-L-methionine, resulting in the formation of 4-dimethylallyl-L-abrine. The catalase easC and the FAD-dependent oxidoreductase easE then transform 4-dimethylallyl-L-abrine to chanoclavine-I which is further oxidized by EasD in the presence of NAD(+), resulting in the formation of chanoclavine-I aldehyde. EasA reduces chanoclavine-I aldehyde to dihydrochanoclavine-I aldehyde that spontaneously dehydrates to form 6,8-dimethyl-6,7-didehydroergoline. EasG then catalyzes the reduction of 6,8-dimethyl-6,7-didehydroergoline to form festuclavine. Hydrolysis of festuclavine by easM then leads to the formation of fumigaclavine B which is in turn acetylated by easN to fumigaclavine A. Finally, easL catalyzes the conversion of fumigaclavine A into fumigaclavine C by attaching a dimethylallyl moiety to C-2 of the indole nucleus. The role of the cytochrome P450 monooxygenase easK within the cluster has not been identified yet. This Aspergillus fumigatus (strain ATCC MYA-4609 / CBS 101355 / FGSC A1100 / Af293) (Neosartorya fumigata) protein is Cytochrome P450 monooxygenase easK.